The chain runs to 466 residues: Ribulose bisphosphate carboxylase large chain (466 aa).

Lys-5 carries the post-translational modification N6,N6,N6-trimethyllysine. 2 residues coordinate substrate: Asn-114 and Thr-164. The Proton acceptor role is filled by Lys-166. Lys-168 contributes to the substrate binding site. Residues Lys-192, Asp-194, and Glu-195 each coordinate Mg(2+). Position 192 is an N6-carboxylysine (Lys-192). His-285 (proton acceptor) is an active-site residue. Substrate is bound by residues Arg-286, His-318, and Ser-370.

The protein belongs to the RuBisCO large chain family. Type I subfamily. Heterohexadecamer of 8 large chains and 8 small chains; disulfide-linked. The disulfide link is formed within the large subunit homodimers. Mg(2+) is required as a cofactor. The disulfide bond which can form in the large chain dimeric partners within the hexadecamer appears to be associated with oxidative stress and protein turnover.

It localises to the plastid. Its subcellular location is the chloroplast. It catalyses the reaction 2 (2R)-3-phosphoglycerate + 2 H(+) = D-ribulose 1,5-bisphosphate + CO2 + H2O. It carries out the reaction D-ribulose 1,5-bisphosphate + O2 = 2-phosphoglycolate + (2R)-3-phosphoglycerate + 2 H(+). RuBisCO catalyzes two reactions: the carboxylation of D-ribulose 1,5-bisphosphate, the primary event in carbon dioxide fixation, as well as the oxidative fragmentation of the pentose substrate in the photorespiration process. Both reactions occur simultaneously and in competition at the same active site. The polypeptide is Ribulose bisphosphate carboxylase large chain (Isophysis tasmanica).